Reading from the N-terminus, the 392-residue chain is MDKSFILNKTSSRSLARRGQLFTAHGKVETPVFCPVGSQAAVKTLTPEDLKSVNINMILSNTYHLYLRPGIPIIKEMGGLHKFMNWDEVILTDSGGYQIFSLANLRKLDEGGVSFRSHIDGSTRYITPEDAVSFQQDLGSDIAMVLDECPHSEASENEVLAAMERTHQWAKRCLAAHTLKIQHLFAIVQGGLSPELRRQSAEYLASLDFPGYALGGLSLGEPKDITFETVRHTLRFLPENKPRYLMGVGAPEDLLEGVSCGVDIFDCVLPTRVARNGAFFSRLGRLNIRNAAFATQKGPIDPECNCYTCRNYSAAYLHHLFRCEEILAYRLATIHNIAFLSNLMQEIRTSIEKDCFEEFKADFLSRYQPTNEAIRIEQKQKWLFGRNGEPPS.

The Proton acceptor role is filled by Asp-93. Substrate contacts are provided by residues 93–97, Asp-147, Gln-189, and Gly-216; that span reads DSGGY. The RNA binding stretch occupies residues 247-253; it reads GVGAPED. Residue Asp-266 is the Nucleophile of the active site. Positions 271–275 are RNA binding; important for wobble base 34 recognition; the sequence is TRVAR. The Zn(2+) site is built by Cys-304, Cys-306, Cys-309, and His-335.

The protein belongs to the queuine tRNA-ribosyltransferase family. As to quaternary structure, homodimer. Within each dimer, one monomer is responsible for RNA recognition and catalysis, while the other monomer binds to the replacement base PreQ1. Requires Zn(2+) as cofactor.

The enzyme catalyses 7-aminomethyl-7-carbaguanine + guanosine(34) in tRNA = 7-aminomethyl-7-carbaguanosine(34) in tRNA + guanine. The protein operates within tRNA modification; tRNA-queuosine biosynthesis. Its function is as follows. Catalyzes the base-exchange of a guanine (G) residue with the queuine precursor 7-aminomethyl-7-deazaguanine (PreQ1) at position 34 (anticodon wobble position) in tRNAs with GU(N) anticodons (tRNA-Asp, -Asn, -His and -Tyr). Catalysis occurs through a double-displacement mechanism. The nucleophile active site attacks the C1' of nucleotide 34 to detach the guanine base from the RNA, forming a covalent enzyme-RNA intermediate. The proton acceptor active site deprotonates the incoming PreQ1, allowing a nucleophilic attack on the C1' of the ribose to form the product. After dissociation, two additional enzymatic reactions on the tRNA convert PreQ1 to queuine (Q), resulting in the hypermodified nucleoside queuosine (7-(((4,5-cis-dihydroxy-2-cyclopenten-1-yl)amino)methyl)-7-deazaguanosine). The protein is Queuine tRNA-ribosyltransferase of Dehalococcoides mccartyi (strain CBDB1).